The chain runs to 81 residues: Photosystem I iron-sulfur center (81 aa).

2 4Fe-4S ferredoxin-type domains span residues 2 to 31 (AHSV…MIPW) and 39 to 68 (IASA…VRVY). Residues C11, C14, C17, C21, C48, C51, C54, and C58 each contribute to the [4Fe-4S] cluster site.

As to quaternary structure, the eukaryotic PSI reaction center is composed of at least 11 subunits. [4Fe-4S] cluster serves as cofactor.

Its subcellular location is the plastid. It localises to the chloroplast thylakoid membrane. It catalyses the reaction reduced [plastocyanin] + hnu + oxidized [2Fe-2S]-[ferredoxin] = oxidized [plastocyanin] + reduced [2Fe-2S]-[ferredoxin]. Apoprotein for the two 4Fe-4S centers FA and FB of photosystem I (PSI); essential for photochemical activity. FB is the terminal electron acceptor of PSI, donating electrons to ferredoxin. The C-terminus interacts with PsaA/B/D and helps assemble the protein into the PSI complex. Required for binding of PsaD and PsaE to PSI. PSI is a plastocyanin-ferredoxin oxidoreductase, converting photonic excitation into a charge separation, which transfers an electron from the donor P700 chlorophyll pair to the spectroscopically characterized acceptors A0, A1, FX, FA and FB in turn. This is Photosystem I iron-sulfur center from Cycas taitungensis (Prince sago).